The following is a 189-amino-acid chain: Xanthine phosphoribosyltransferase (189 aa).

Xanthine is bound by residues Leu20 and Asn27. Position 128 to 132 (128 to 132) interacts with 5-phospho-alpha-D-ribose 1-diphosphate; that stretch reads ANGEA. Lys156 serves as a coordination point for xanthine.

Belongs to the purine/pyrimidine phosphoribosyltransferase family. Xpt subfamily. As to quaternary structure, homodimer.

Its subcellular location is the cytoplasm. The catalysed reaction is XMP + diphosphate = xanthine + 5-phospho-alpha-D-ribose 1-diphosphate. It functions in the pathway purine metabolism; XMP biosynthesis via salvage pathway; XMP from xanthine: step 1/1. Converts the preformed base xanthine, a product of nucleic acid breakdown, to xanthosine 5'-monophosphate (XMP), so it can be reused for RNA or DNA synthesis. This is Xanthine phosphoribosyltransferase from Clostridium acetobutylicum (strain ATCC 824 / DSM 792 / JCM 1419 / IAM 19013 / LMG 5710 / NBRC 13948 / NRRL B-527 / VKM B-1787 / 2291 / W).